Reading from the N-terminus, the 184-residue chain is Tumor necrosis factor alpha-induced protein 8-like protein 2 (184 aa).

Serine 3 carries the phosphoserine modification.

The protein belongs to the TNFAIP8 family. TNFAIP8L2 subfamily. As to quaternary structure, may interact with CASP8; however, such result is unclear since could not reproduce the interaction with CASP8. Interacts with RAC1. Phosphorylated by TAK1/MAP3K7; this phosphorylation triggers association with BTRC and subsequent ubiquitination and degradation. In terms of processing, ubiquitinated in a BTRC-depdent manner; leading to degradation mediated through the proteasome pathway.

The protein resides in the cytoplasm. The protein localises to the nucleus. Its subcellular location is the lysosome. Its function is as follows. Acts as a negative regulator of innate and adaptive immunity by maintaining immune homeostasis. Plays a regulatory role in the Toll-like signaling pathway by determining the strength of LPS-induced signaling and gene expression. Inhibits TCR-mediated T-cell activation and negatively regulate T-cell function to prevent hyperresponsiveness. Also inhibits autolysosome formation via negatively modulating MTOR activation by interacting with RAC1 and promoting the disassociation of the RAC1-MTOR complex. Plays an essential role in NK-cell biology by acting as a checkpoint and displaying an expression pattern correlating with NK-cell maturation process and by negatively regulating NK-cell maturation and antitumor immunity. Mechanistically, suppresses IL-15-triggered mTOR activity in NK-cells. This chain is Tumor necrosis factor alpha-induced protein 8-like protein 2 (Tnfaip8l2), found in Rattus norvegicus (Rat).